The sequence spans 592 residues: Aspartate--tRNA(Asp/Asn) ligase (592 aa).

Glu177 contacts L-aspartate. Positions 201 to 204 (QLFK) are aspartate. Residue Arg223 participates in L-aspartate binding. ATP-binding positions include 223–225 (RDE) and Gln232. His451 is an L-aspartate binding site. Glu485 serves as a coordination point for ATP. L-aspartate is bound at residue Arg492. 537-540 (GLDR) contacts ATP.

The protein belongs to the class-II aminoacyl-tRNA synthetase family. Type 1 subfamily. Homodimer.

The protein resides in the cytoplasm. The enzyme catalyses tRNA(Asx) + L-aspartate + ATP = L-aspartyl-tRNA(Asx) + AMP + diphosphate. Aspartyl-tRNA synthetase with relaxed tRNA specificity since it is able to aspartylate not only its cognate tRNA(Asp) but also tRNA(Asn). Reaction proceeds in two steps: L-aspartate is first activated by ATP to form Asp-AMP and then transferred to the acceptor end of tRNA(Asp/Asn). The sequence is that of Aspartate--tRNA(Asp/Asn) ligase from Bacillus subtilis (strain 168).